Here is a 4700-residue protein sequence, read N- to C-terminus: StAR-related lipid transfer protein 9 (4700 aa).

The 382-residue stretch at 3-384 (NVQVAVRVRP…LRYASSAKNI (382 aa)) folds into the Kinesin motor domain. Residue 103–110 (GQTGSGKT) coordinates ATP. Over residues 310-328 (GDSGILSSPSGTSSGGAPS) the composition is skewed to low complexity. The segment at 310-331 (GDSGILSSPSGTSSGGAPSRRQ) is disordered. One can recognise an FHA domain in the interval 498 to 569 (LKEGTTKIGR…LTQGAVITLG (72 aa)). Composition is skewed to basic and acidic residues over residues 631–646 (QCDE…ETSH) and 867–877 (TSEKTSSEEHL). Disordered regions lie at residues 631 to 652 (QCDE…QIQQ), 851 to 880 (WDPS…LPQA), 1057 to 1104 (KKSS…SDTD), and 1128 to 1188 (ERKW…GFTA). The span at 1134–1146 (PEPENSESDDSQL) shows a compositional bias: acidic residues. Ser1203 is modified (phosphoserine). Disordered stretches follow at residues 1939–1976 (MPGE…EGKN), 2014–2043 (ERNP…RVNN), 2088–2179 (DQKE…PARD), 2254–2290 (ESQV…QEEN), 2377–2403 (GVEH…SSEA), 2416–2444 (MGSH…SPQD), 2479–2539 (LNKV…PRLL), 2589–2613 (RVAG…EGEA), 2642–2678 (LSAD…RKRR), 2696–2731 (SSSS…PVEE), 2765–2789 (PQET…PRTL), 2821–2852 (VQNS…ASPK), 2892–2955 (SKHS…PCRQ), 3124–3144 (NAQV…PHTL), 3199–3241 (HTCS…GLDG), 3274–3412 (SLRQ…MPST), 3564–3611 (IALG…KGSA), 3766–3790 (SDTS…AEET), 3830–3884 (LPSV…RVQK), 3906–3991 (ASTQ…SPKL), 4033–4086 (PEKV…QHLS), and 4153–4193 (PGGL…EWSK). Positions 2088–2100 (DQKEQEKTDHAFR) are enriched in basic and acidic residues. Residues 2103-2118 (SSGNPLPSKDQPSSPR) are compositionally biased toward polar residues. Residues 2119 to 2129 (QTDDTVFRDSE) are compositionally biased toward basic and acidic residues. Over residues 2137–2148 (SIGNHPQVQKIT) the composition is skewed to polar residues. Over residues 2153 to 2169 (RSREGVRESEPVREHTH) the composition is skewed to basic and acidic residues. Over residues 2254–2266 (ESQVAEHVSSSNQ) the composition is skewed to polar residues. Basic and acidic residues-rich tracts occupy residues 2267–2279 (EEPK…EEMP) and 2379–2391 (EHQD…RSHS). Over residues 2500 to 2510 (QASKPRQKAEK) the composition is skewed to basic and acidic residues. The segment covering 2642 to 2653 (LSADSFESLPNT) has biased composition (polar residues). The span at 2712–2729 (PSSADPLAPDSPRSSAPV) shows a compositional bias: low complexity. Residues 2916-2925 (APCRHPREAL) show a composition bias toward basic and acidic residues. A compositionally biased stretch (polar residues) spans 3124 to 3141 (NAQVCQTNPEPPATTQGP). 3 stretches are compositionally biased toward polar residues: residues 3274–3285 (SLRQNETPQPAA), 3320–3339 (SSPT…QELN), and 3368–3387 (SGKS…QKAS). Positions 3388–3397 (SRLDDGTTDH) are enriched in basic and acidic residues. Residues 3857–3872 (SSPSPSSPHSPGLFPS) are compositionally biased toward low complexity. A compositionally biased stretch (polar residues) spans 3906–3924 (ASTQEPGLSPGSLTLSAPS). Positions 3958 to 3975 (LGGSQRGRSSLQRSNGRS) are enriched in low complexity. The segment covering 4048–4065 (EPSQWQSRTENGGESSAS) has biased composition (polar residues). Positions 4334–4387 (SDIELMLQDYQQAHEEAKVEIARARDQLRERTEQEKLRIHQKIISQLLKEEDKL) form a coiled coil. A compositionally biased stretch (low complexity) spans 4397–4411 (CTSSNGSLSSGMTSG). The tract at residues 4397–4419 (CTSSNGSLSSGMTSGYNSSPALS) is disordered. The START domain occupies 4483-4700 (SYQDLAKHVV…IARLASFLGR (218 aa)).

Belongs to the TRAFAC class myosin-kinesin ATPase superfamily. Kinesin family. As to quaternary structure, interacts with ATAD3A. In terms of tissue distribution, expressed in the central nervous system, muscle cells (heart and skeletal muscle), pancreas, prostate and lung.

It localises to the cytoplasm. Its subcellular location is the cytoskeleton. The protein localises to the microtubule organizing center. It is found in the centrosome. The protein resides in the centriole. It localises to the nucleus. Microtubule-dependent motor protein required for spindle pole assembly during mitosis. Required to stabilize the pericentriolar material (PCM). This is StAR-related lipid transfer protein 9 (STARD9) from Homo sapiens (Human).